The following is a 210-amino-acid chain: Na(+)-translocating NADH-quinone reductase subunit D (210 aa).

Helical transmembrane passes span 42-62 (FVMT…VSLI), 72-92 (IIVQ…VLKA), 103-123 (VFVG…AFAM), 131-151 (LIDG…VGFF), and 178-198 (NGLM…IWVI).

This sequence belongs to the NqrDE/RnfAE family. As to quaternary structure, composed of six subunits; NqrA, NqrB, NqrC, NqrD, NqrE and NqrF.

The protein resides in the cell inner membrane. The catalysed reaction is a ubiquinone + n Na(+)(in) + NADH + H(+) = a ubiquinol + n Na(+)(out) + NAD(+). In terms of biological role, NQR complex catalyzes the reduction of ubiquinone-1 to ubiquinol by two successive reactions, coupled with the transport of Na(+) ions from the cytoplasm to the periplasm. NqrA to NqrE are probably involved in the second step, the conversion of ubisemiquinone to ubiquinol. The chain is Na(+)-translocating NADH-quinone reductase subunit D from Vibrio campbellii (strain ATCC BAA-1116).